The chain runs to 110 residues: Small ribosomal subunit protein eS25 (110 aa).

The tract at residues 1 to 38 is disordered; that stretch reads MGGKKKPTLSQLAKKAEKEKAQQAQKAKKEVKKEETPA. Over residues 14–38 the composition is skewed to basic and acidic residues; sequence KKAEKEKAQQAQKAKKEVKKEETPA.

The protein belongs to the eukaryotic ribosomal protein eS25 family.

This chain is Small ribosomal subunit protein eS25 (rps25e), found in Pyrobaculum aerophilum (strain ATCC 51768 / DSM 7523 / JCM 9630 / CIP 104966 / NBRC 100827 / IM2).